Reading from the N-terminus, the 191-residue chain is Peptidyl-tRNA hydrolase (191 aa).

Tyrosine 17 lines the tRNA pocket. The Proton acceptor role is filled by histidine 22. The tRNA site is built by tyrosine 68, asparagine 70, and asparagine 116.

Belongs to the PTH family. Monomer.

The protein localises to the cytoplasm. It carries out the reaction an N-acyl-L-alpha-aminoacyl-tRNA + H2O = an N-acyl-L-amino acid + a tRNA + H(+). Its function is as follows. Hydrolyzes ribosome-free peptidyl-tRNAs (with 1 or more amino acids incorporated), which drop off the ribosome during protein synthesis, or as a result of ribosome stalling. Functionally, catalyzes the release of premature peptidyl moieties from peptidyl-tRNA molecules trapped in stalled 50S ribosomal subunits, and thus maintains levels of free tRNAs and 50S ribosomes. The protein is Peptidyl-tRNA hydrolase of Mycolicibacterium smegmatis (strain ATCC 700084 / mc(2)155) (Mycobacterium smegmatis).